A 454-amino-acid chain; its full sequence is tRNA modification GTPase MnmE (454 aa).

Residues Arg-23, Glu-80, and Lys-120 each coordinate (6S)-5-formyl-5,6,7,8-tetrahydrofolate. One can recognise a TrmE-type G domain in the interval 216-377; the sequence is GMKVVIAGRP…LRDHLKQSMG (162 aa). Asn-226 provides a ligand contact to K(+). GTP contacts are provided by residues 226 to 231, 245 to 251, 270 to 273, 335 to 338, and 358 to 360; these read NAGKSS, TDIAGTT, DTAG, NKAD, and SAR. Ser-230 serves as a coordination point for Mg(2+). K(+)-binding residues include Thr-245, Ile-247, and Thr-250. Thr-251 contacts Mg(2+). Lys-454 is a binding site for (6S)-5-formyl-5,6,7,8-tetrahydrofolate.

It belongs to the TRAFAC class TrmE-Era-EngA-EngB-Septin-like GTPase superfamily. TrmE GTPase family. In terms of assembly, homodimer. Heterotetramer of two MnmE and two MnmG subunits. It depends on K(+) as a cofactor.

The protein resides in the cytoplasm. Functionally, exhibits a very high intrinsic GTPase hydrolysis rate. Involved in the addition of a carboxymethylaminomethyl (cmnm) group at the wobble position (U34) of certain tRNAs, forming tRNA-cmnm(5)s(2)U34. This is tRNA modification GTPase MnmE from Yersinia pestis.